A 453-amino-acid polypeptide reads, in one-letter code: Crh-like protein CRH11 (453 aa).

Positions 1-21 (MKFTTLATIASTLLFAANANA) are cleaved as a signal peptide. Cysteine 24 and cysteine 32 are joined by a disulfide. The GH16 domain maps to 28–227 (KSSDCSPVPA…WAGGITDYSQ (200 aa)). Glutamate 119 acts as the Nucleophile in catalysis. Glutamate 123 acts as the Proton donor in catalysis. Residues glutamate 123, tryptophan 204, and threonine 215 each coordinate chitin. Disordered stretches follow at residues 281-343 (LESG…SEKS), 362-397 (KTTVTSSSGVSVPTSASVSTAAGTTSGSANSAPASA), and 410-430 (GDAAPSSSASEKPSVSTTENN). Composition is skewed to low complexity over residues 286–343 (SVDS…SEKS), 363–397 (TTVTSSSGVSVPTSASVSTAAGTTSGSANSAPASA), and 412–425 (AAPSSSASEKPSVS). Asparagine 290 carries N-linked (GlcNAc...) asparagine glycosylation. Asparagine 430 carries the GPI-anchor amidated asparagine lipid modification. The propeptide at 431-453 (GAVSVAKTTSLFGFVALIGFLFV) is removed in mature form.

This sequence belongs to the glycosyl hydrolase 16 family. CRH1 subfamily. The GPI-anchor is attached to the protein in the endoplasmic reticulum and serves to target the protein to the cell surface. There, the glucosamine-inositol phospholipid moiety is cleaved off and the GPI-modified mannoprotein is covalently attached via its lipidless GPI glycan remnant to the 1,6-beta-glucan of the outer cell wall layer.

Its subcellular location is the secreted. It is found in the cell wall. It localises to the membrane. The catalysed reaction is Random endo-hydrolysis of N-acetyl-beta-D-glucosaminide (1-&gt;4)-beta-linkages in chitin and chitodextrins.. Dual chitinase/transglycosylase that plays a role in cell wall architecture. Chitinase and transglycosylase activities are coupled. Required for the polysaccharide cross-linking at the septa and the cell wall. More specifically, transfers chitin to 1,6-beta-glucan in the cell wall. Plays an important role in fungal pathogenesis via its functions in cell wall assembly and regeneration, filamentation, and adherence to host cells. The polypeptide is Crh-like protein CRH11 (CRH11) (Candida albicans (strain SC5314 / ATCC MYA-2876) (Yeast)).